The chain runs to 887 residues: Valine--tRNA ligase (887 aa).

The 'HIGH' region motif lies at 45–55 (PNVTGILHMGH). Positions 528–532 (KMSKS) match the 'KMSKS' region motif. Residue Lys-531 participates in ATP binding. A coiled-coil region spans residues 817 to 887 (TGLLNNEAEI…LKESLKSFEE (71 aa)).

This sequence belongs to the class-I aminoacyl-tRNA synthetase family. ValS type 1 subfamily. In terms of assembly, monomer.

It is found in the cytoplasm. It carries out the reaction tRNA(Val) + L-valine + ATP = L-valyl-tRNA(Val) + AMP + diphosphate. In terms of biological role, catalyzes the attachment of valine to tRNA(Val). As ValRS can inadvertently accommodate and process structurally similar amino acids such as threonine, to avoid such errors, it has a 'posttransfer' editing activity that hydrolyzes mischarged Thr-tRNA(Val) in a tRNA-dependent manner. The protein is Valine--tRNA ligase of Fusobacterium nucleatum subsp. nucleatum (strain ATCC 25586 / DSM 15643 / BCRC 10681 / CIP 101130 / JCM 8532 / KCTC 2640 / LMG 13131 / VPI 4355).